The primary structure comprises 440 residues: Ferredoxin--NADP reductase (440 aa).

In terms of domain architecture, CpcD-like spans 17–75 (SRVFVYEVVGMRQNEETDQTNYPIRKSGSVFIRVPYNRMNQEMQRITRLGGKIVSIQTV). The tract at residues 93 to 142 (ASSETAKSEGNGKATPVKTDSGAKGFAKPPAEEQLKKKDNKGNTMTQAKA) is disordered. Residues 122–133 (PAEEQLKKKDNK) are compositionally biased toward basic and acidic residues. Residues 155 to 279 (NAPFIGKVIS…TGPVGKEMLL (125 aa)) enclose the FAD-binding FR-type domain. FAD is bound by residues 214-217 (RLYS), 235-237 (CVR), Tyr241, 253-255 (VCS), and Thr294. NADP(+) is bound by residues Ser217 and Arg237. NADP(+) is bound by residues Thr294, 330-331 (VP), 360-361 (SR), 370-374 (RMYIQ), 399-400 (GL), and Glu438.

The protein belongs to the ferredoxin--NADP reductase type 1 family. The cofactor is FAD.

It is found in the cellular thylakoid membrane. It carries out the reaction 2 reduced [2Fe-2S]-[ferredoxin] + NADP(+) + H(+) = 2 oxidized [2Fe-2S]-[ferredoxin] + NADPH. This is Ferredoxin--NADP reductase (petH) from Trichormus variabilis (strain ATCC 29413 / PCC 7937) (Anabaena variabilis).